Reading from the N-terminus, the 230-residue chain is Ubiquitin carboxyl-terminal hydrolase isozyme L3 (230 aa).

Positions 5–229 constitute a UCH catalytic domain; that stretch reads RWLPLEANPE…LRFNAIALSA (225 aa). Residues 8 to 13 are interaction with ubiquitin; sequence PLEANP. C95 serves as the catalytic Nucleophile. Phosphoserine is present on S130. Residues 152-159 are interaction with ubiquitin. Crossover loop which restricts access of large ubiquitin adducts to the active site; sequence AHEGQTEA. H169 serves as the catalytic Proton donor. The interval 219 to 224 is interaction with ubiquitin; sequence ELRFNA.

The protein belongs to the peptidase C12 family. In terms of assembly, preferentially binds diubiquitin; the interaction does not hydrolyze diubiquitin but, in vitro, inhibits the hydrolyzing activity on other substrates.

It is found in the cytoplasm. The catalysed reaction is Thiol-dependent hydrolysis of ester, thioester, amide, peptide and isopeptide bonds formed by the C-terminal Gly of ubiquitin (a 76-residue protein attached to proteins as an intracellular targeting signal).. Inhibited by monoubiquitin and diubiquitin. Deubiquitinating enzyme (DUB) that controls levels of cellular ubiquitin through processing of ubiquitin precursors and ubiquitinated proteins. Thiol protease that recognizes and hydrolyzes a peptide bond at the C-terminal glycine of either ubiquitin or NEDD8. Has a 10-fold preference for Arg and Lys at position P3, and exhibits a preference towards 'Lys-48'-linked ubiquitin chains. Deubiquitinates ENAC in apical compartments, thereby regulating apical membrane recycling. Indirectly increases the phosphorylation of IGFIR, AKT and FOXO1 and promotes insulin-signaling and insulin-induced adipogenesis. Required for stress-response retinal, skeletal muscle and germ cell maintenance. May be involved in working memory. Can hydrolyze UBB(+1), a mutated form of ubiquitin which is not effectively degraded by the proteasome. In Sus scrofa (Pig), this protein is Ubiquitin carboxyl-terminal hydrolase isozyme L3 (UCHL3).